Reading from the N-terminus, the 853-residue chain is Cytochrome P450 monooxygenase mpaDE (853 aa).

Residues 1–6 (MKSLSL) are Lumenal-facing. A helical membrane pass occupies residues 7–29 (TWITAVAVVLYLVQRYVRSYWRL). The Cytoplasmic portion of the chain corresponds to 30 to 853 (KDIPGPVLAK…DIENSIEGQK (824 aa)). Cys-449 contributes to the heme binding site.

It belongs to the cytochrome P450 family. Heme serves as cofactor.

It is found in the endoplasmic reticulum membrane. The catalysed reaction is 5-methylorsellinate + reduced [NADPH--hemoprotein reductase] + O2 = 4,6-dihydroxy-2-(hydroxymethyl)-3-methylbenzoate + oxidized [NADPH--hemoprotein reductase] + H2O + H(+). It carries out the reaction 4,6-dihydroxy-2-(hydroxymethyl)-3-methylbenzoate + H(+) = 5,7-dihydroxy-4-methylphthalide + H2O. It participates in secondary metabolite biosynthesis; terpenoid biosynthesis. Its function is as follows. Cytochrome P450 monooxygenase; part of the gene cluster that mediates the biosynthesis of mycophenolic acid (MPA), the first isolated antibiotic natural product in the world obtained from a culture of Penicillium brevicompactum in 1893. MpaDE is an endoplasmic reticulum-bound enzyme that catalyzes the conversion of 5-methylorsellinic acid (5MOA) into the phthalide compound 5,7-dihydroxy-4,6-dimethylphthalide (DHMP). MpaDE first catalyzes hydroxylation of 5-MOA to 4,6-dihydroxy-2-(hydroxymethyl)-3-methylbenzoic acid (DHMB), and then acts as a lactone synthase that catalyzes the ring closure to convert DHMB into DHMP. The first step of the pathway is the synthesis of 5-methylorsellinic acid (5MOA) by the cytosolic polyketide synthase mpaC. 5MOA is then converted to the phthalide compound 5,7-dihydroxy-4,6-dimethylphthalide (DHMP) by the endoplasmic reticulum-bound cytochrome P450 monooxygenase mpaDE. MpaDE first catalyzes hydroxylation of 5-MOA to 4,6-dihydroxy-2-(hydroxymethyl)-3-methylbenzoic acid (DHMB). MpaDE then acts as a lactone synthase that catalyzes the ring closure to convert DHMB into DHMP. The next step is the prenylation of DHMP by the Golgi apparatus-associated prenyltransferase mpaA to yield farnesyl-DHMP (FDHMP). The ER-bound oxygenase mpaB then mediates the oxidative cleavage the C19-C20 double bond in FDHMP to yield FDHMP-3C via a mycophenolic aldehyde intermediate. The O-methyltransferase mpaG catalyzes the methylation of FDHMP-3C to yield MFDHMP-3C. After the cytosolic methylation of FDHMP-3C, MFDHMP-3C enters into peroxisomes probably via free diffusion due to its low molecular weight. Upon a peroxisomal CoA ligation reaction, catalyzed by a beta-oxidation component enzyme acyl-CoA ligase ACL891, MFDHMP-3C-CoA would then be restricted to peroxisomes for the following beta-oxidation pathway steps. The peroxisomal beta-oxidation machinery than converts MFDHMP-3C-CoA into MPA_CoA, via a beta-oxidation chain-shortening process. Finally mpaH acts as a peroxisomal acyl-CoA hydrolase with high substrate specificity toward MPA-CoA to release the final product MPA. The protein is Cytochrome P450 monooxygenase mpaDE of Penicillium brevicompactum.